Here is a 479-residue protein sequence, read N- to C-terminus: ATP synthase subunit beta (479 aa).

ATP is bound at residue 153 to 160 (GGAGVGKT).

This sequence belongs to the ATPase alpha/beta chains family. F-type ATPases have 2 components, CF(1) - the catalytic core - and CF(0) - the membrane proton channel. CF(1) has five subunits: alpha(3), beta(3), gamma(1), delta(1), epsilon(1). CF(0) has three main subunits: a(1), b(2) and c(9-12). The alpha and beta chains form an alternating ring which encloses part of the gamma chain. CF(1) is attached to CF(0) by a central stalk formed by the gamma and epsilon chains, while a peripheral stalk is formed by the delta and b chains.

It is found in the cell membrane. It catalyses the reaction ATP + H2O + 4 H(+)(in) = ADP + phosphate + 5 H(+)(out). Functionally, produces ATP from ADP in the presence of a proton gradient across the membrane. The catalytic sites are hosted primarily by the beta subunits. The chain is ATP synthase subunit beta from Lactobacillus helveticus (strain DPC 4571).